A 158-amino-acid chain; its full sequence is MASRSMRLLLLLSCLAKTGVLGDIIMRPSCAPGWFYHKSNCYGYFRKLRNWSDAELECQSYGNGAHLASILSLKEASTIAEYISGYQRSQPIWIGLHDPQKRQQWQWIDGAMYLYRSWSGKSMGGNKHCAEMSSNNNFLTWSSNECNKRQHFLCKYRP.

The first 22 residues, 1-22 (MASRSMRLLLLLSCLAKTGVLG), serve as a signal peptide directing secretion. The cysteines at positions 30 and 41 are disulfide-linked. Residues 37–155 (HKSNCYGYFR…CNKRQHFLCK (119 aa)) enclose the C-type lectin domain. Asn50 is a glycosylation site (N-linked (GlcNAc...) asparagine). Intrachain disulfides connect Cys58/Cys154 and Cys129/Cys146. A carbohydrate is bound by residues 98–103 (DPQKRQ) and 135–137 (NNN).

Highly expressed in the gastrointestinal tract including the duodenum, jejunum, ileum, ileocecum, appendix, descending colon, pancreas and small intestine. Weakly expressed in normal colon and stomach. Strongly expressed in most colorectal tumors than in normal colon. Preferentially expressed in mucinous tumors and in some cases neuro-endocrine tumors. Expressed in mucus-secreting cells and enterocyte-like cells. In small intestine expressed at the basal perinuclear zone of goblet cells.

Its subcellular location is the secreted. In terms of biological role, calcium-independent lectin displaying mannose-binding specificity and able to maintain carbohydrate recognition activity in an acidic environment. May be involved in inflammatory and metaplastic responses of the gastrointestinal epithelium. The polypeptide is Regenerating islet-derived protein 4 (REG4) (Homo sapiens (Human)).